A 78-amino-acid polypeptide reads, in one-letter code: uncharacterized protein (78 aa).

This is an uncharacterized protein from Escherichia coli.